Here is a 1048-residue protein sequence, read N- to C-terminus: Integrin alpha-V (1048 aa).

The signal sequence occupies residues 1 to 30 (MAFPPRRRLRLGPRGLPLLLSGLLLPLCRA). The Extracellular segment spans residues 31–992 (FNLDVESPAE…WGIQPAPMPV (962 aa)). FG-GAP repeat units lie at residues 32-98 (NLDV…RRCQ), 109-170 (DYAK…VEYA), 173-225 (RSKN…VSKY), 237-291 (QLAT…GKNM), 292-357 (SSLH…GDFQ), 358-415 (TIKL…GLNA), and 419-482 (QILE…VYPS). Asparagine 74 carries N-linked (GlcNAc...) asparagine glycosylation. Intrachain disulfides connect cysteine 89-cysteine 97, cysteine 138-cysteine 158, and cysteine 172-cysteine 185. Aspartate 260, asparagine 262, aspartate 264, isoleucine 266, and aspartate 268 together coordinate Ca(2+). 2 N-linked (GlcNAc...) asparagine glycosylation sites follow: asparagine 290 and asparagine 296. Residues aspartate 314, asparagine 316, aspartate 318, tyrosine 320, aspartate 322, aspartate 379, aspartate 381, aspartate 383, phenylalanine 385, aspartate 387, aspartate 443, aspartate 445, asparagine 447, tyrosine 449, and aspartate 451 each contribute to the Ca(2+) site. Asparagine 488 is a glycosylation site (N-linked (GlcNAc...) asparagine). 2 cysteine pairs are disulfide-bonded: cysteine 491-cysteine 502 and cysteine 508-cysteine 565. 2 N-linked (GlcNAc...) asparagine glycosylation sites follow: asparagine 554 and asparagine 615. 2 cysteine pairs are disulfide-bonded: cysteine 626–cysteine 632 and cysteine 698–cysteine 711. Asparagine 704, asparagine 835, asparagine 851, and asparagine 874 each carry an N-linked (GlcNAc...) asparagine glycan. Intrachain disulfides connect cysteine 852/cysteine 914 and cysteine 904/cysteine 909. N-linked (GlcNAc...) asparagine glycosylation is found at asparagine 945, asparagine 973, and asparagine 980. The helical transmembrane segment at 993–1016 (PVWVIILAVLAGLLLLAVLVFVMY) threads the bilayer. Over 1017 to 1048 (RMGFFKRVRPPQEEQEREQLQPHENGEGNSET) the chain is Cytoplasmic. The GFFKR motif signature appears at 1019–1023 (GFFKR). Positions 1027-1042 (PQEEQEREQLQPHENG) are enriched in basic and acidic residues. Residues 1027 to 1048 (PQEEQEREQLQPHENGEGNSET) are disordered.

It belongs to the integrin alpha chain family. Heterodimer of an alpha and a beta subunit. The alpha subunit is composed of a heavy and a light chain linked by a disulfide bond. Alpha-V (ITGAV) associates with either beta-1 (ITGB1), beta-3 (ITGB3), beta-5 (ITGB5), beta-6 (ITGB6) or beta-8 (ITGB8). Interacts with RAB25. Interacts with CIB1. Integrins ITGAV:ITGB3 and ITGAV:ITGB5 interact with FBLN5 (via N-terminus). ITGAV:ITGB3 and ITGAV:ITGB5 interact with CCN3. ITGAV:ITGB3 interacts with ADGRA2. ITGAV:ITGB3 interacts with FGF2; it is likely that FGF2 can simultaneously bind ITGAV:ITGB3 and FGF receptors. ITGAV:ITGB3 interacts with SELP (via C-type lectin domain); the interaction mediates cell-cell interaction and adhesion. ITGAV:ITGB3 is found in a ternary complex with CX3CR1 and CX3CL1. ITGAV:ITGB3 is found in a ternary complex with NRG1 and ERBB3. ITGAV:ITGB3 is found in a ternary complex with FGF1 and FGFR1. ITGAV:ITGB3 is found in a ternary complex with IGF1 and IGF1R. ITGAV:ITGB3 interacts with IGF2. ITGAV:ITGB3 and ITGAV:ITGB6 interact with FBN1. ITGAV:ITGB3 interacts with CD9, CD81 and CD151 (via second extracellular domain). ITGAV:ITGB6 interacts with TGFB1. ITGAV:ITGB3 interacts with PTN. Forms a complex with PTPRZ1 and PTN that stimulates endothelial cell migration through ITGB3 'Tyr-773' phosphorylation. Interacts with TM4SF19. In terms of assembly, (Microbial infection) Alpha-V/beta-6 and alpha-V/beta-3 bind to foot-and-mouth disease virus (FMDV) VP1 protein and acts as a receptor for this virus.

It localises to the cell membrane. The protein resides in the cell junction. It is found in the focal adhesion. The alpha-V (ITGAV) integrins are receptors for vitronectin, cytotactin, fibronectin, fibrinogen, laminin, matrix metalloproteinase-2, osteopontin, osteomodulin, prothrombin, thrombospondin, TGFB1 and vWF. They recognize the sequence R-G-D in a wide array of ligands. Alpha-V integrins may play a role in embryo implantation, angiogenesis and wound healing. ITGAV:ITGB3 binds to fractalkine (CX3CL1) and may act as its coreceptor in CX3CR1-dependent fractalkine signaling. ITGAV:ITGB3 binds to NRG1 (via EGF domain) and this binding is essential for NRG1-ERBB signaling. ITGAV:ITGB3 binds to FGF1 and this binding is essential for FGF1 signaling. ITGAV:ITGB3 binds to FGF2 and this binding is essential for FGF2 signaling. ITGAV:ITGB3 binds to IGF1 and this binding is essential for IGF1 signaling. ITGAV:ITGB3 binds to IGF2 and this binding is essential for IGF2 signaling. ITGAV:ITGB3 binds to IL1B and this binding is essential for IL1B signaling. ITGAV:ITGB3 binds to PLA2G2A via a site (site 2) which is distinct from the classical ligand-binding site (site 1) and this induces integrin conformational changes and enhanced ligand binding to site 1. ITGAV:ITGB3 and ITGAV:ITGB6 act as receptors for fibrillin-1 (FBN1) and mediate R-G-D-dependent cell adhesion to FBN1. Integrin alpha-V/beta-6 or alpha-V/beta-8 (ITGAV:ITGB6 or ITGAV:ITGB8) mediates R-G-D-dependent release of transforming growth factor beta-1 (TGF-beta-1) from regulatory Latency-associated peptide (LAP), thereby playing a key role in TGF-beta-1 activation. ITGAV:ITGB3 acts as a receptor for CD40LG. ITGAV:ITGB3 acts as a receptor for IBSP and promotes cell adhesion and migration to IBSP. This Bos taurus (Bovine) protein is Integrin alpha-V (ITGAV).